The primary structure comprises 594 residues: Glutamate decarboxylase 1 (594 aa).

Low complexity predominate over residues 1-13; that stretch reads MASSTPSSSATSS. Residues 1 to 23 form a disordered region; that stretch reads MASSTPSSSATSSNAGADPNTTN. A Phosphoserine modification is found at S78. Residue 190–192 participates in 4-aminobutanoate binding; it reads QLS. An N6-(pyridoxal phosphate)lysine modification is found at K405. R567 is a 4-aminobutanoate binding site.

The protein belongs to the group II decarboxylase family. As to quaternary structure, homodimer. It depends on pyridoxal 5'-phosphate as a cofactor.

The catalysed reaction is L-glutamate + H(+) = 4-aminobutanoate + CO2. Catalyzes the synthesis of the inhibitory neurotransmitter gamma-aminobutyric acid (GABA) with pyridoxal 5'-phosphate as cofactor. This Pongo abelii (Sumatran orangutan) protein is Glutamate decarboxylase 1 (GAD1).